The sequence spans 521 residues: Acidic amino acid decarboxylase GADL1 (521 aa).

Lysine 333 bears the N6-(pyridoxal phosphate)lysine mark.

Belongs to the group II decarboxylase family. Homodimer. Requires pyridoxal 5'-phosphate as cofactor. Expressed very weakly in neurons and not detected in astrocytes, brain or liver.

The catalysed reaction is L-aspartate + H(+) = beta-alanine + CO2. It catalyses the reaction 3-sulfino-L-alanine + H(+) = hypotaurine + CO2. It carries out the reaction L-cysteate + H(+) = taurine + CO2. In terms of biological role, may catalyze the decarboxylation of L-aspartate, 3-sulfino-L-alanine (cysteine sulfinic acid), and L-cysteate to beta-alanine, hypotaurine and taurine, respectively. Does not exhibit any decarboxylation activity toward glutamate. The protein is Acidic amino acid decarboxylase GADL1 (GADL1) of Homo sapiens (Human).